The sequence spans 472 residues: Siroheme synthase 1 (472 aa).

The segment at 1 to 203 (MDYLPLFADL…GQLTEAENEL (203 aa)) is precorrin-2 dehydrogenase /sirohydrochlorin ferrochelatase. NAD(+)-binding positions include 22–23 (EV) and 43–44 (QT). Residue S128 is modified to Phosphoserine. The interval 215 to 472 (GEVALVGAGP…AISPSVVNLA (258 aa)) is uroporphyrinogen-III C-methyltransferase. P224 serves as a coordination point for S-adenosyl-L-methionine. D247 functions as the Proton acceptor in the catalytic mechanism. Residue K269 is the Proton donor of the active site. S-adenosyl-L-methionine is bound by residues 300 to 302 (GGD), I305, 330 to 331 (TA), M382, and G411.

In the N-terminal section; belongs to the precorrin-2 dehydrogenase / sirohydrochlorin ferrochelatase family. This sequence in the C-terminal section; belongs to the precorrin methyltransferase family.

It carries out the reaction uroporphyrinogen III + 2 S-adenosyl-L-methionine = precorrin-2 + 2 S-adenosyl-L-homocysteine + H(+). The enzyme catalyses precorrin-2 + NAD(+) = sirohydrochlorin + NADH + 2 H(+). It catalyses the reaction siroheme + 2 H(+) = sirohydrochlorin + Fe(2+). It functions in the pathway cofactor biosynthesis; adenosylcobalamin biosynthesis; precorrin-2 from uroporphyrinogen III: step 1/1. It participates in cofactor biosynthesis; adenosylcobalamin biosynthesis; sirohydrochlorin from precorrin-2: step 1/1. The protein operates within porphyrin-containing compound metabolism; siroheme biosynthesis; precorrin-2 from uroporphyrinogen III: step 1/1. Its pathway is porphyrin-containing compound metabolism; siroheme biosynthesis; siroheme from sirohydrochlorin: step 1/1. It functions in the pathway porphyrin-containing compound metabolism; siroheme biosynthesis; sirohydrochlorin from precorrin-2: step 1/1. Multifunctional enzyme that catalyzes the SAM-dependent methylations of uroporphyrinogen III at position C-2 and C-7 to form precorrin-2 via precorrin-1. Then it catalyzes the NAD-dependent ring dehydrogenation of precorrin-2 to yield sirohydrochlorin. Finally, it catalyzes the ferrochelation of sirohydrochlorin to yield siroheme. The protein is Siroheme synthase 1 of Yersinia pseudotuberculosis serotype I (strain IP32953).